The chain runs to 64 residues: Potassium channel toxin kappa-KTx 3.4 (64 aa).

An N-terminal signal peptide occupies residues 1 to 26; sequence MKSTLMTASLLILVLLSIIDYASVYA. The propeptide occupies 27–36; the sequence is EFIDSEISLE. Intrachain disulfides connect cysteine 43/cysteine 61 and cysteine 47/cysteine 57.

The protein belongs to the short scorpion toxin superfamily. Potassium channel inhibitor kappa-KTx family. Kappa-KTx 3 subfamily. As to expression, expressed by the venom gland.

The protein resides in the secreted. Functionally, potassium channel inhibitor (Kv). This is Potassium channel toxin kappa-KTx 3.4 from Heterometrus petersii (Asian forest scorpion).